The primary structure comprises 131 residues: Profilin-2 (131 aa).

It belongs to the profilin family. As to quaternary structure, occurs in many kinds of cells as a complex with monomeric actin in a 1:1 ratio. Expressed in vascular bundles of roots, hypocotyls, cotyledons, leaves, sepals, petals, stamen filaments and stalks of developing seeds. Expressed in leaf epidermal cells, trichomes and stem epidermal cells. Detected in phloem exudates (at protein level).

Its subcellular location is the cytoplasm. It is found in the cytoskeleton. It localises to the endoplasmic reticulum. The protein resides in the cytosol. The protein localises to the nucleus. Binds to actin monomers and regulates the organization of the actin cytoskeleton. At high concentrations, profilin prevents the polymerization of actin, whereas it enhances it at low concentrations. At low concentrations, associates with the poly-proline motif of formins to enhance actin filament elongation rate. Binds G-actin and poly-L-proline with low affinity in vitro. Binds ACT1, ACT7 and ACT11 and inhibits actin polymerization. May be involved in the cross-talk between vesicular trafficking and the actin cytoskeleton. Inhibits cell growth of various pathogenic fungal strains. May play a role as antifungal proteins in the defense system against fungal pathogen attacks. In Arabidopsis thaliana (Mouse-ear cress), this protein is Profilin-2.